A 386-amino-acid chain; its full sequence is TRIBOA-glucoside O-methyltransferase BX7 (386 aa).

S-adenosyl-L-methionine is bound by residues glycine 224, aspartate 248, methionine 270, and lysine 283. Residue histidine 287 is the Proton acceptor of the active site.

This sequence belongs to the class I-like SAM-binding methyltransferase superfamily. Cation-independent O-methyltransferase family. COMT subfamily. In terms of tissue distribution, expressed in seedlings and newly formed crown roots. Highest expression in the scutellar node. Low to non detectable levels in cob, tassel and mature organs like husk or leaves.

It carries out the reaction TRIBOA beta-D-glucoside + S-adenosyl-L-methionine = DIMBOA beta-D-glucoside + S-adenosyl-L-homocysteine + H(+). O-methyltransferase involved in the benzoxazinoid glucoside biosynthesis. Can use 2,4,7-trihydroxy-2H-1,4-benzoxazin-3(4H)-one 2-D-glucoside (TRIBOA-glucoside) as substrate, but not aglucone TRIBOA, caffeic acid, ferulic acid, apigenin or quercetin. This chain is TRIBOA-glucoside O-methyltransferase BX7 (BX7), found in Zea mays (Maize).